The sequence spans 585 residues: Glutamate decarboxylase 2 (585 aa).

Residues 1-25 (MASPGSGFWSFGSEDGSGDPENPGT) form a disordered region. A phosphoserine mark is found at S3, S6, S10, S13, and S17. Residues C30 and C45 are each lipidated (S-palmitoyl cysteine). A substrate-binding site is contributed by 181–183 (QLS). An N6-(pyridoxal phosphate)lysine modification is found at K396. Position 558 (R558) interacts with substrate.

It belongs to the group II decarboxylase family. In terms of assembly, homodimer. Pyridoxal 5'-phosphate serves as cofactor. In terms of processing, the N-terminus is blocked. Phosphorylated; which does not affect kinetic parameters or subcellular location. Post-translationally, palmitoylated; which is required for presynaptic clustering.

It localises to the cytoplasm. Its subcellular location is the cytosol. It is found in the cytoplasmic vesicle. The protein localises to the presynaptic cell membrane. The protein resides in the golgi apparatus membrane. It carries out the reaction L-glutamate + H(+) = 4-aminobutanoate + CO2. Catalyzes the production of GABA. The chain is Glutamate decarboxylase 2 (Gad2) from Rattus norvegicus (Rat).